Here is a 246-residue protein sequence, read N- to C-terminus: 3-oxoacyl-[acyl-carrier-protein] reductase FabG (246 aa).

Residues 11-14 (GASR), S36, 62-63 (DV), and N89 each bind NADP(+). S141 is a substrate binding site. Y154 serves as the catalytic Proton acceptor. NADP(+)-binding positions include 154–158 (YVAAK) and I187.

Belongs to the short-chain dehydrogenases/reductases (SDR) family. Homotetramer.

It carries out the reaction a (3R)-hydroxyacyl-[ACP] + NADP(+) = a 3-oxoacyl-[ACP] + NADPH + H(+). It participates in lipid metabolism; fatty acid biosynthesis. Functionally, catalyzes the NADPH-dependent reduction of beta-ketoacyl-ACP substrates to beta-hydroxyacyl-ACP products, the first reductive step in the elongation cycle of fatty acid biosynthesis. This is 3-oxoacyl-[acyl-carrier-protein] reductase FabG (fabG) from Bacillus subtilis (strain 168).